The following is a 341-amino-acid chain: Very-long-chain 3-oxoacyl-CoA reductase (341 aa).

A helical transmembrane segment spans residues 17–37 (ALYGALLLGVYKLTTFALSLV). NADP(+) is bound by residues V63, D117, N144, Y218, K222, V251, and S253. Y218 serves as the catalytic Proton donor. The active-site Lowers pKa of active site Tyr is K222.

Belongs to the short-chain dehydrogenases/reductases (SDR) family.

The protein resides in the endoplasmic reticulum membrane. The catalysed reaction is a very-long-chain (3R)-3-hydroxyacyl-CoA + NADP(+) = a very-long-chain 3-oxoacyl-CoA + NADPH + H(+). The protein operates within lipid metabolism; fatty acid biosynthesis. Functionally, component of the microsomal membrane bound fatty acid elongation system, which produces the 26-carbon very long-chain fatty acids (VLCFA) from palmitate. Catalyzes the reduction of the 3-ketoacyl-CoA intermediate that is formed in each cycle of fatty acid elongation. VLCFAs serve as precursors for ceramide and sphingolipids. In Meyerozyma guilliermondii (strain ATCC 6260 / CBS 566 / DSM 6381 / JCM 1539 / NBRC 10279 / NRRL Y-324) (Yeast), this protein is Very-long-chain 3-oxoacyl-CoA reductase.